Here is a 518-residue protein sequence, read N- to C-terminus: Trigger factor (518 aa).

The region spanning 170 to 255 (GDVVVIDFVG…VKGLESPQEA (86 aa)) is the PPIase FKBP-type domain. Residues 447–518 (EAPAKPAKKA…AKKAAAKKDA (72 aa)) are disordered. Basic residues-rich tracts occupy residues 452–468 (PAKKAVAKKKAPAKKAA) and 501–518 (PAAKKKAPAKKAAAKKDA).

It belongs to the FKBP-type PPIase family. Tig subfamily.

It localises to the cytoplasm. It carries out the reaction [protein]-peptidylproline (omega=180) = [protein]-peptidylproline (omega=0). Its function is as follows. Involved in protein export. Acts as a chaperone by maintaining the newly synthesized protein in an open conformation. Functions as a peptidyl-prolyl cis-trans isomerase. This is Trigger factor from Maricaulis maris (strain MCS10) (Caulobacter maris).